Reading from the N-terminus, the 957-residue chain is Vacuolar membrane protease (957 aa).

The Cytoplasmic segment spans residues 1 to 10 (MARYNPFSFT). Residues 11 to 31 (PGPVVFFTTVIYVGLFAALLV) traverse the membrane as a helical segment. Over 32–369 (THLTVPDYPS…RVFVVFQLHT (338 aa)) the chain is Vacuolar. 3 N-linked (GlcNAc...) asparagine glycosylation sites follow: Asn-48, Asn-105, and Asn-136. Residues His-152 and Asp-164 each coordinate Zn(2+). The active-site Proton acceptor is Glu-198. Zn(2+) contacts are provided by Glu-199, Glu-224, and His-297. The chain crosses the membrane as a helical span at residues 370 to 390 (LFALCVTLLVVAPIALIGLTF). The Cytoplasmic segment spans residues 391 to 423 (GLSKADKNYLLARKAFVYSSDDDNPVQLYGWRG). Residues 424-444 (FFRFPIVFVSATAVVVALAYL) form a helical membrane-spanning segment. The Vacuolar segment spans residues 445–450 (LVRFNA). The helical transmembrane segment at 451 to 471 (FIIYSSPFAVWSMMLSAWFFV) threads the bilayer. The Cytoplasmic portion of the chain corresponds to 472–490 (AWFFSRGADAMRPSALQRM). A helical transmembrane segment spans residues 491–511 (YALIWLFIGSFVLLTIITVFV). At 512 to 521 (NNYQVVAGYP) the chain is on the vacuolar side. The chain crosses the membrane as a helical span at residues 522–542 (ALFYFAVVFAALMLSYLELFF). Topologically, residues 543 to 642 (APTKSAYARH…YPGEQEWSGK (100 aa)) are cytoplasmic. 2 disordered regions span residues 560-591 (RRNS…DATE) and 603-628 (FTRY…RRLD). Residues 564–577 (ESASRPLTGSTTAA) show a composition bias toward polar residues. A helical transmembrane segment spans residues 643-663 (LPSWIWIIQLLLLAPLVIVLV). Residues 664-685 (GQVALLLTSALYQTPSDGNSPL) lie on the Vacuolar side of the membrane. A helical membrane pass occupies residues 686 to 706 (FIYLAIAALSVLLLAPTGPFI). The Cytoplasmic portion of the chain corresponds to 707–713 (HRFTYHV). A helical membrane pass occupies residues 714–734 (PTFLFLVCLATVIYNLVAFPF). The Vacuolar segment spans residues 735-957 (SRDHRLKVYF…LVEGFKQFEI (223 aa)). N-linked (GlcNAc...) asparagine glycans are attached at residues Asn-782, Asn-818, and Asn-834.

This sequence belongs to the peptidase M28 family. Requires Zn(2+) as cofactor.

It localises to the vacuole membrane. In terms of biological role, may be involved in vacuolar sorting and osmoregulation. The chain is Vacuolar membrane protease from Pyrenophora tritici-repentis (strain Pt-1C-BFP) (Wheat tan spot fungus).